The primary structure comprises 101 residues: Small ribosomal subunit protein cS23 (101 aa).

It belongs to the chloroplast-specific ribosomal protein cS23 family. Part of the 30S ribosomal subunit.

The protein resides in the plastid. It localises to the chloroplast. Functionally, probably a ribosomal protein or a ribosome-associated protein. The sequence is that of Small ribosomal subunit protein cS23 (ycf65) from Euglena mutabilis.